The primary structure comprises 637 residues: Serine/threonine protein kinase ypkA (637 aa).

The segment covering 20-29 (TFTRSSSTST) has biased composition (low complexity). 2 disordered regions span residues 20–63 (TFTR…SLVS) and 104–140 (SSSVRPSSSSSHSTHGQTASFAQSGRPQSTSGGINAA). Residues 40–61 (VVSQTPSISSTNSNGINASESL) are compositionally biased toward polar residues. A compositionally biased stretch (low complexity) spans 104 to 116 (SSSVRPSSSSSHS). The segment covering 117 to 136 (THGQTASFAQSGRPQSTSGG) has biased composition (polar residues). In terms of domain architecture, Protein kinase spans 294 to 551 (FDLLKVVGKG…AAEIKSHHFF (258 aa)). Residues 300-308 (VGKGSFGKV) and K323 contribute to the ATP site. Residue D417 is the Proton acceptor of the active site. The AGC-kinase C-terminal domain occupies 552 to 623 (ANIDWRKLLQ…NRPVAGLGDA (72 aa)). 2 positions are modified to phosphoserine: S593 and S612. Position 613 is a phosphotyrosine (Y613).

The protein belongs to the protein kinase superfamily. Ser/Thr protein kinase family. Interacts with the sakA MAP kinase.

It carries out the reaction L-seryl-[protein] + ATP = O-phospho-L-seryl-[protein] + ADP + H(+). It catalyses the reaction L-threonyl-[protein] + ATP = O-phospho-L-threonyl-[protein] + ADP + H(+). In terms of biological role, serine/threonine protein kinase required for vegetative growth and conidiation. Important for fungal survival through the regulation of glycosphingolipid (GSL) biosynthesis and cross talks with MAP kinase pathways such as the cell wall integrity (CWI) and the high osmolarity glycerol (HOG) pathways. The protein is Serine/threonine protein kinase ypkA of Aspergillus fumigatus (strain ATCC MYA-4609 / CBS 101355 / FGSC A1100 / Af293) (Neosartorya fumigata).